Reading from the N-terminus, the 542-residue chain is Peptide chain release factor 3 (542 aa).

One can recognise a tr-type G domain in the interval 11–279 (EKRRTFAIIS…AYVEYAPSPR (269 aa)). Residues 20–27 (SHPDAGKT), 88–92 (DTPGH), and 142–145 (NKLD) contribute to the GTP site.

It belongs to the TRAFAC class translation factor GTPase superfamily. Classic translation factor GTPase family. PrfC subfamily.

It is found in the cytoplasm. Functionally, increases the formation of ribosomal termination complexes and stimulates activities of RF-1 and RF-2. It binds guanine nucleotides and has strong preference for UGA stop codons. It may interact directly with the ribosome. The stimulation of RF-1 and RF-2 is significantly reduced by GTP and GDP, but not by GMP. The sequence is that of Peptide chain release factor 3 from Nitrosococcus oceani (strain ATCC 19707 / BCRC 17464 / JCM 30415 / NCIMB 11848 / C-107).